The following is an 83-amino-acid chain: Calsensin (83 aa).

EF-hand domains lie at 4-39 and 46-81; these read KVKA…LDAY and KVKE…LLCQ. 10 residues coordinate Ca(2+): Asp17, Asn19, Asp21, Tyr23, Glu28, Asp59, Asn61, Asp63, Lys65, and Glu70.

As to expression, selectively expressed in a small group of neurons.

It is found in the cytoplasm. In terms of biological role, may function as a trigger protein which interacts with a larger protein. May mediate calcium-dependent signal transduction events in the growth cones and axons of a small group of sensory neurons which fasciculate in a single axon tract. The protein is Calsensin of Haemopis marmorata (Green horse leech).